The sequence spans 400 residues: Argininosuccinate synthase (400 aa).

8-16 (AYSGGLDTS) is an ATP binding site. Tyr87 lines the L-citrulline pocket. Gly117 serves as a coordination point for ATP. Positions 119, 123, and 124 each coordinate L-aspartate. Asn123 contacts L-citrulline. Residues Arg127, Ser175, Glu260, and Tyr272 each contribute to the L-citrulline site.

Belongs to the argininosuccinate synthase family. Type 1 subfamily. Homotetramer.

Its subcellular location is the cytoplasm. The enzyme catalyses L-citrulline + L-aspartate + ATP = 2-(N(omega)-L-arginino)succinate + AMP + diphosphate + H(+). Its pathway is amino-acid biosynthesis; L-arginine biosynthesis; L-arginine from L-ornithine and carbamoyl phosphate: step 2/3. The sequence is that of Argininosuccinate synthase from Mycolicibacterium gilvum (strain PYR-GCK) (Mycobacterium gilvum (strain PYR-GCK)).